The following is a 201-amino-acid chain: MATAVAGPEIERLIQLLSRLPGLGPRSARRAALHLIKKREALMAPLASALQVAIERIQVCKTCGNIDTQNPCTVCTDPRRDPAIIVVVADVADLWALERAHASNGRYHVLGATLSPLDGVGPQDLTIDALVARAHDPQVSEIVLALNATVDGQTTAHYITDLLMEANVKVTRLAHGVPVGGELDYLDEGTLSAAMRQRTLF.

The C4-type zinc finger occupies 60 to 75 (CKTCGNIDTQNPCTVC). The 96-residue stretch at 83 to 178 (AIIVVVADVA…KVTRLAHGVP (96 aa)) folds into the Toprim domain.

Belongs to the RecR family.

Its function is as follows. May play a role in DNA repair. It seems to be involved in an RecBC-independent recombinational process of DNA repair. It may act with RecF and RecO. The sequence is that of Recombination protein RecR from Rhodopseudomonas palustris (strain BisA53).